The sequence spans 184 residues: NADH-quinone oxidoreductase subunit B (184 aa).

Positions 37, 38, 103, and 132 each coordinate [4Fe-4S] cluster.

The protein belongs to the complex I 20 kDa subunit family. As to quaternary structure, NDH-1 is composed of 14 different subunits. Subunits NuoB, C, D, E, F, and G constitute the peripheral sector of the complex. It depends on [4Fe-4S] cluster as a cofactor.

The protein resides in the cell membrane. It carries out the reaction a quinone + NADH + 5 H(+)(in) = a quinol + NAD(+) + 4 H(+)(out). Its function is as follows. NDH-1 shuttles electrons from NADH, via FMN and iron-sulfur (Fe-S) centers, to quinones in the respiratory chain. The immediate electron acceptor for the enzyme in this species is believed to be a menaquinone. Couples the redox reaction to proton translocation (for every two electrons transferred, four hydrogen ions are translocated across the cytoplasmic membrane), and thus conserves the redox energy in a proton gradient. In Mycolicibacterium vanbaalenii (strain DSM 7251 / JCM 13017 / BCRC 16820 / KCTC 9966 / NRRL B-24157 / PYR-1) (Mycobacterium vanbaalenii), this protein is NADH-quinone oxidoreductase subunit B.